The following is a 488-amino-acid chain: MTDNDYPFDMLSQLSRLSQMSGIEDIIIETQPQESISDLNMIDSEAASVASVTNDRTLMRRCIVTLFFNDTAENLADWALDPASYFNEPEKDIKEWVGQFELCPTTNHLHAHIHVHFARQMRFQFIRDQFSAVSQIKLGDIKKGRGTSKHAVQCAVNYCIDPRKRHPEEPFNEAYLWPGNKTKWEFDQACADKQTKKKPTKEQLVKDKIALVDSFPYHWTWDQIVHSSDEAKELFFGCSASERYHKTRAVVQARRVIESVEIHYGAGGTGKSTFARQLGTKLGETSGRDEKYTRNYDDGNFWGGGITKYAGEAVVHLEEFEGQETLSKFKDICELGASGPNVNVKNGGTTLNHSHVVITSNTHPAGFYKGVWKGDPKQFAPFWRRITKLVFYPAHLPDGSLNAPKCDEDVYSIDQTEEWKALQGNYEGCLKMAERDWALRDDDLDSNKRPFDDAFSEGFVLPRPRQMQRSATEHNLFQYARSGRDPTS.

The segment at 462 to 488 is disordered; it reads PRPRQMQRSATEHNLFQYARSGRDPTS.

The protein resides in the host nucleus. Plays an essential for the replication of viral DNA. Presumably cleaves viral genomic dsRNA replicative form to initiate rolling circle replication. The chain is Replication-associated protein from Chaetoceros diatodnavirus 1 (Chaetoceros setoense DNA virus).